Consider the following 360-residue polypeptide: Type 2 DNA topoisomerase 6 subunit A (360 aa).

Positions 3 to 140 (EIERRCLRAL…FHIRPEEDGA (138 aa)) constitute a Topo IIA-type catalytic domain. Tyr97 functions as the O-(5'-phospho-DNA)-tyrosine intermediate in the catalytic mechanism. 2 residues coordinate Mg(2+): Glu193 and Asp245.

This sequence belongs to the TOP6A family. Homodimer. Heterotetramer of two Top6A and two Top6B chains. It depends on Mg(2+) as a cofactor.

It catalyses the reaction ATP-dependent breakage, passage and rejoining of double-stranded DNA.. Its function is as follows. Relaxes both positive and negative superturns and exhibits a strong decatenase activity. This Archaeoglobus fulgidus (strain ATCC 49558 / DSM 4304 / JCM 9628 / NBRC 100126 / VC-16) protein is Type 2 DNA topoisomerase 6 subunit A.